A 122-amino-acid polypeptide reads, in one-letter code: Ribonuclease P protein component (122 aa).

The protein belongs to the RnpA family. Consists of a catalytic RNA component (M1 or rnpB) and a protein subunit.

The enzyme catalyses Endonucleolytic cleavage of RNA, removing 5'-extranucleotides from tRNA precursor.. Functionally, RNaseP catalyzes the removal of the 5'-leader sequence from pre-tRNA to produce the mature 5'-terminus. It can also cleave other RNA substrates such as 4.5S RNA. The protein component plays an auxiliary but essential role in vivo by binding to the 5'-leader sequence and broadening the substrate specificity of the ribozyme. The protein is Ribonuclease P protein component of Synechococcus elongatus (strain ATCC 33912 / PCC 7942 / FACHB-805) (Anacystis nidulans R2).